We begin with the raw amino-acid sequence, 294 residues long: 4-hydroxy-tetrahydrodipicolinate synthase (294 aa).

T45 provides a ligand contact to pyruvate. Catalysis depends on Y133, which acts as the Proton donor/acceptor. The active-site Schiff-base intermediate with substrate is K161. I203 is a binding site for pyruvate.

Belongs to the DapA family. Homotetramer; dimer of dimers.

The protein localises to the cytoplasm. The catalysed reaction is L-aspartate 4-semialdehyde + pyruvate = (2S,4S)-4-hydroxy-2,3,4,5-tetrahydrodipicolinate + H2O + H(+). It functions in the pathway amino-acid biosynthesis; L-lysine biosynthesis via DAP pathway; (S)-tetrahydrodipicolinate from L-aspartate: step 3/4. Its function is as follows. Catalyzes the condensation of (S)-aspartate-beta-semialdehyde [(S)-ASA] and pyruvate to 4-hydroxy-tetrahydrodipicolinate (HTPA). The chain is 4-hydroxy-tetrahydrodipicolinate synthase from Shewanella sp. (strain MR-4).